We begin with the raw amino-acid sequence, 535 residues long: Dimethylaniline monooxygenase [N-oxide-forming] 2 (535 aa).

Ala-2 bears the N-acetylalanine mark. Residues 9 to 13 (GAGVS), Glu-32, 40 to 41 (LW), and 61 to 62 (NT) each bind FAD. NADP(+) contacts are provided by residues 60 to 61 (TN) and 195 to 198 (SASD). Lys-492 participates in a covalent cross-link: Glycyl lysine isopeptide (Lys-Gly) (interchain with G-Cter in SUMO). The chain crosses the membrane as a helical span at residues 510–530 (LSASFLMKILALVAVFVAFFS).

It belongs to the FMO family. FAD is required as a cofactor. Mg(2+) serves as cofactor. Lung.

The protein resides in the microsome membrane. It is found in the endoplasmic reticulum membrane. Functionally, catalyzes the oxidative metabolism of numerous xenobiotics, including mainly therapeutic drugs and insecticides that contain a soft nucleophile, most commonly nitrogen and sulfur and participates to their bioactivation. This chain is Dimethylaniline monooxygenase [N-oxide-forming] 2, found in Cavia porcellus (Guinea pig).